A 124-amino-acid chain; its full sequence is Peptidyl-tRNA hydrolase (124 aa).

The protein belongs to the PTH2 family.

It localises to the cytoplasm. The enzyme catalyses an N-acyl-L-alpha-aminoacyl-tRNA + H2O = an N-acyl-L-amino acid + a tRNA + H(+). Its function is as follows. The natural substrate for this enzyme may be peptidyl-tRNAs which drop off the ribosome during protein synthesis. The sequence is that of Peptidyl-tRNA hydrolase from Aeropyrum pernix (strain ATCC 700893 / DSM 11879 / JCM 9820 / NBRC 100138 / K1).